Reading from the N-terminus, the 343-residue chain is Dihydroorotase (343 aa).

Residues His14 and His16 each contribute to the Zn(2+) site. Substrate is bound by residues 16-18 and Asn42; that span reads HLR. Positions 97, 136, 170, and 242 each coordinate Zn(2+). Lys97 is modified (N6-carboxylysine). His136 contributes to the substrate binding site. Asp242 is an active-site residue. Substrate-binding residues include His246 and Ala258.

This sequence belongs to the metallo-dependent hydrolases superfamily. DHOase family. Class II DHOase subfamily. In terms of assembly, homodimer. Requires Zn(2+) as cofactor.

It carries out the reaction (S)-dihydroorotate + H2O = N-carbamoyl-L-aspartate + H(+). It participates in pyrimidine metabolism; UMP biosynthesis via de novo pathway; (S)-dihydroorotate from bicarbonate: step 3/3. Functionally, catalyzes the reversible cyclization of carbamoyl aspartate to dihydroorotate. The sequence is that of Dihydroorotase from Helicobacter hepaticus (strain ATCC 51449 / 3B1).